We begin with the raw amino-acid sequence, 329 residues long: Probable cell division protein WhiA (329 aa).

The segment at residues 275–308 (SLEELGALADPPLTKDAVAGRIRRLLAMADKRAQ) is a DNA-binding region (H-T-H motif).

It belongs to the WhiA family.

Involved in cell division and chromosome segregation. The sequence is that of Probable cell division protein WhiA from Streptomyces griseus subsp. griseus (strain JCM 4626 / CBS 651.72 / NBRC 13350 / KCC S-0626 / ISP 5235).